Here is a 255-residue protein sequence, read N- to C-terminus: Sulfate transporter CysZ (255 aa).

A run of 4 helical transmembrane segments spans residues 26–46, 71–91, 150–170, and 211–231; these read LFVL…IYFA, LLWP…FTML, LFIL…WLLF, and IVYL…AAVA.

This sequence belongs to the CysZ family.

It localises to the cell inner membrane. Functionally, high affinity, high specificity proton-dependent sulfate transporter, which mediates sulfate uptake. Provides the sulfur source for the cysteine synthesis pathway. The chain is Sulfate transporter CysZ from Pseudomonas fluorescens (strain SBW25).